The following is a 341-amino-acid chain: S-adenosylmethionine:tRNA ribosyltransferase-isomerase (341 aa).

Belongs to the QueA family. In terms of assembly, monomer.

It is found in the cytoplasm. It carries out the reaction 7-aminomethyl-7-carbaguanosine(34) in tRNA + S-adenosyl-L-methionine = epoxyqueuosine(34) in tRNA + adenine + L-methionine + 2 H(+). It functions in the pathway tRNA modification; tRNA-queuosine biosynthesis. Its function is as follows. Transfers and isomerizes the ribose moiety from AdoMet to the 7-aminomethyl group of 7-deazaguanine (preQ1-tRNA) to give epoxyqueuosine (oQ-tRNA). This chain is S-adenosylmethionine:tRNA ribosyltransferase-isomerase, found in Clostridium kluyveri (strain NBRC 12016).